The following is a 618-amino-acid chain: Dihydroxy-acid dehydratase (618 aa).

Position 81 (D81) interacts with Mg(2+). C122 is a binding site for [2Fe-2S] cluster. Mg(2+)-binding residues include D123 and K124. The residue at position 124 (K124) is an N6-carboxylysine. Residue C195 coordinates [2Fe-2S] cluster. E491 serves as a coordination point for Mg(2+). S517 acts as the Proton acceptor in catalysis.

This sequence belongs to the IlvD/Edd family. In terms of assembly, homodimer. The cofactor is [2Fe-2S] cluster. It depends on Mg(2+) as a cofactor.

It carries out the reaction (2R)-2,3-dihydroxy-3-methylbutanoate = 3-methyl-2-oxobutanoate + H2O. The enzyme catalyses (2R,3R)-2,3-dihydroxy-3-methylpentanoate = (S)-3-methyl-2-oxopentanoate + H2O. Its pathway is amino-acid biosynthesis; L-isoleucine biosynthesis; L-isoleucine from 2-oxobutanoate: step 3/4. It functions in the pathway amino-acid biosynthesis; L-valine biosynthesis; L-valine from pyruvate: step 3/4. In terms of biological role, functions in the biosynthesis of branched-chain amino acids. Catalyzes the dehydration of (2R,3R)-2,3-dihydroxy-3-methylpentanoate (2,3-dihydroxy-3-methylvalerate) into 2-oxo-3-methylpentanoate (2-oxo-3-methylvalerate) and of (2R)-2,3-dihydroxy-3-methylbutanoate (2,3-dihydroxyisovalerate) into 2-oxo-3-methylbutanoate (2-oxoisovalerate), the penultimate precursor to L-isoleucine and L-valine, respectively. The polypeptide is Dihydroxy-acid dehydratase (Rhodopseudomonas palustris (strain ATCC BAA-98 / CGA009)).